A 106-amino-acid polypeptide reads, in one-letter code: uncharacterized protein (106 aa).

This is an uncharacterized protein from Thermoproteus tenax virus 1 (strain KRA1) (TTV1).